Here is a 318-residue protein sequence, read N- to C-terminus: cAMP/cGMP dual specificity phosphodiesterase MT0825 (318 aa).

Residues Asp21, His23, and Asp63 each contribute to the Fe cation site. Residues His23, Asp63, and 97–98 contribute to the AMP site; that span reads NH. Mn(2+)-binding residues include Asp63, Asn97, His169, and His207. His209 lines the Fe cation pocket. His209 is a binding site for AMP. Positions 278-318 are C-terminal extension; sequence PGQARRKIAESGIFIEPSRRDSLFKHPPMVLTSSAPRSPVD.

This sequence belongs to the cyclic nucleotide phosphodiesterase class-III family. In terms of assembly, homodimer. The cofactor is Fe(3+). It depends on Mn(2+) as a cofactor.

It is found in the cytoplasm. The protein localises to the cell membrane. It localises to the secreted. Its subcellular location is the cell wall. The protein resides in the cell envelope. The enzyme catalyses a nucleoside 2',3'-cyclic phosphate + H2O = a nucleoside 3'-phosphate + H(+). The catalysed reaction is 2',3'-cyclophospho-AMP + H2O = 3'-AMP + H(+). It carries out the reaction 2',3'-cyclophospho-GMP + H2O = 3'-GMP + H(+). It catalyses the reaction a nucleoside 3',5'-cyclic phosphate + H2O = a nucleoside 5'-phosphate + H(+). The enzyme catalyses 3',5'-cyclic AMP + H2O = AMP + H(+). The catalysed reaction is 3',5'-cyclic GMP + H2O = GMP + H(+). Functionally, cyclic nucleotide phosphodiesterase with a dual-specificity for the second messengers cAMP and cGMP. The sequence is that of cAMP/cGMP dual specificity phosphodiesterase MT0825 from Mycobacterium tuberculosis (strain CDC 1551 / Oshkosh).